A 142-amino-acid chain; its full sequence is Large ribosomal subunit protein uL11 (142 aa).

It belongs to the universal ribosomal protein uL11 family. In terms of assembly, part of the ribosomal stalk of the 50S ribosomal subunit. Interacts with L10 and the large rRNA to form the base of the stalk. L10 forms an elongated spine to which L12 dimers bind in a sequential fashion forming a multimeric L10(L12)X complex. Post-translationally, one or more lysine residues are methylated.

In terms of biological role, forms part of the ribosomal stalk which helps the ribosome interact with GTP-bound translation factors. The sequence is that of Large ribosomal subunit protein uL11 from Xanthomonas axonopodis pv. citri (strain 306).